The chain runs to 382 residues: MTREGQFREELGYDRMPTLERGRQDAGRQDPGSYTPDSKPKDLQLSKRLPPCFSYKTWVFSVLMGSCLLVTSGFSLYLGNVFPSEMDYLRCAAGSCIPSAIVSFAVGRRNVSAIPNFQILFVSTFAVTTTCLIWFGCKLILNPSAININFNLILLLLLELLMAATVIISARSSEEPCKKKKGSISDGSNILDEVTFPARVLKSYSVVEVIAGVSAVLGGVIALNVEEAVSGPHLSVTFFWILVACFPSAIASHVTAECPSKCLVEVLIAISSLTSPLLFTASGYLSFSVMRVVEIFKDYPPAIKSYDVLLLLLLLLLLLQGGLNTGTAIQCVSFKVSARLQAASWDPQSCPQERPAGEVVRGPLKEFDKEKAWRAVVVQMAQ.

The segment covering 1–28 (MTREGQFREELGYDRMPTLERGRQDAGR) has biased composition (basic and acidic residues). Residues 1–43 (MTREGQFREELGYDRMPTLERGRQDAGRQDPGSYTPDSKPKDL) form a disordered region. 4 helical membrane passes run 58-78 (WVFS…SLYL), 88-107 (YLRC…FAVG), 117-137 (FQIL…WFGC), and 148-168 (INFN…TVII). Ser183, Ser185, and Ser188 each carry phosphoserine. A run of 4 helical transmembrane segments spans residues 205–225 (SVVE…ALNV), 234–254 (LSVT…ASHV), 263–283 (LVEV…TASG), and 309–329 (LLLL…GTAI).

As to quaternary structure, interacts with ATP1B1. Part of a complex containing ATP1B1, TRPV4, AQP4 and HEPACAM.

The protein resides in the membrane. Its subcellular location is the cell membrane. The protein localises to the cytoplasm. It is found in the perinuclear region. It localises to the endoplasmic reticulum. In terms of biological role, transmembrane protein mainly expressed in brain astrocytes that may play a role in transport across the blood-brain and brain-cerebrospinal fluid barriers. Regulates the response of astrocytes to hypo-osmosis by promoting calcium influx. May function as regulatory protein of membrane protein complexes such as ion channels. This chain is Membrane protein MLC1, found in Mus musculus (Mouse).